Reading from the N-terminus, the 136-residue chain is Small ribosomal subunit protein uS12 (136 aa).

D89 is modified (3-methylthioaspartic acid). The segment at 104 to 136 is disordered; the sequence is TAGVNGRTQRRSKYGAKRPKPGQAAAAAKGKKK. The segment covering 111-123 has biased composition (basic residues); it reads TQRRSKYGAKRPK. The span at 124–136 shows a compositional bias: low complexity; that stretch reads PGQAAAAAKGKKK.

This sequence belongs to the universal ribosomal protein uS12 family. Part of the 30S ribosomal subunit. Contacts proteins S8 and S17. May interact with IF1 in the 30S initiation complex.

Its function is as follows. With S4 and S5 plays an important role in translational accuracy. Interacts with and stabilizes bases of the 16S rRNA that are involved in tRNA selection in the A site and with the mRNA backbone. Located at the interface of the 30S and 50S subunits, it traverses the body of the 30S subunit contacting proteins on the other side and probably holding the rRNA structure together. The combined cluster of proteins S8, S12 and S17 appears to hold together the shoulder and platform of the 30S subunit. The polypeptide is Small ribosomal subunit protein uS12 (Parabacteroides distasonis (strain ATCC 8503 / DSM 20701 / CIP 104284 / JCM 5825 / NCTC 11152)).